The sequence spans 159 residues: Phosphopantetheine adenylyltransferase (159 aa).

S8 provides a ligand contact to substrate. ATP is bound by residues 8-9 (SF) and H16. The substrate site is built by K40, V72, and R86. ATP contacts are provided by residues 87-89 (GVR), E97, and 122-128 (YAALRSS).

It belongs to the bacterial CoaD family. In terms of assembly, homohexamer. Mg(2+) serves as cofactor.

It is found in the cytoplasm. The catalysed reaction is (R)-4'-phosphopantetheine + ATP + H(+) = 3'-dephospho-CoA + diphosphate. Its pathway is cofactor biosynthesis; coenzyme A biosynthesis; CoA from (R)-pantothenate: step 4/5. Its function is as follows. Reversibly transfers an adenylyl group from ATP to 4'-phosphopantetheine, yielding dephospho-CoA (dPCoA) and pyrophosphate. The sequence is that of Phosphopantetheine adenylyltransferase from Treponema pallidum (strain Nichols).